A 114-amino-acid polypeptide reads, in one-letter code: Nucleoid-associated protein SGR_3378 (114 aa).

It belongs to the YbaB/EbfC family. Homodimer.

The protein resides in the cytoplasm. The protein localises to the nucleoid. Its function is as follows. Binds to DNA and alters its conformation. May be involved in regulation of gene expression, nucleoid organization and DNA protection. This chain is Nucleoid-associated protein SGR_3378, found in Streptomyces griseus subsp. griseus (strain JCM 4626 / CBS 651.72 / NBRC 13350 / KCC S-0626 / ISP 5235).